We begin with the raw amino-acid sequence, 216 residues long: Phosphatidylserine decarboxylase proenzyme (216 aa).

S183 serves as the catalytic Schiff-base intermediate with substrate; via pyruvic acid. The residue at position 183 (S183) is a Pyruvic acid (Ser); by autocatalysis.

The protein belongs to the phosphatidylserine decarboxylase family. PSD-A subfamily. Heterodimer of a large membrane-associated beta subunit and a small pyruvoyl-containing alpha subunit. It depends on pyruvate as a cofactor. Is synthesized initially as an inactive proenzyme. Formation of the active enzyme involves a self-maturation process in which the active site pyruvoyl group is generated from an internal serine residue via an autocatalytic post-translational modification. Two non-identical subunits are generated from the proenzyme in this reaction, and the pyruvate is formed at the N-terminus of the alpha chain, which is derived from the carboxyl end of the proenzyme. The post-translation cleavage follows an unusual pathway, termed non-hydrolytic serinolysis, in which the side chain hydroxyl group of the serine supplies its oxygen atom to form the C-terminus of the beta chain, while the remainder of the serine residue undergoes an oxidative deamination to produce ammonia and the pyruvoyl prosthetic group on the alpha chain.

It is found in the cell membrane. It carries out the reaction a 1,2-diacyl-sn-glycero-3-phospho-L-serine + H(+) = a 1,2-diacyl-sn-glycero-3-phosphoethanolamine + CO2. The protein operates within phospholipid metabolism; phosphatidylethanolamine biosynthesis; phosphatidylethanolamine from CDP-diacylglycerol: step 2/2. In terms of biological role, catalyzes the formation of phosphatidylethanolamine (PtdEtn) from phosphatidylserine (PtdSer). The polypeptide is Phosphatidylserine decarboxylase proenzyme (Cupriavidus taiwanensis (strain DSM 17343 / BCRC 17206 / CCUG 44338 / CIP 107171 / LMG 19424 / R1) (Ralstonia taiwanensis (strain LMG 19424))).